Consider the following 489-residue polypeptide: UDP-N-acetylmuramoyl-L-alanyl-D-glutamate--2,6-diaminopimelate ligase (489 aa).

Residue serine 30 coordinates UDP-N-acetyl-alpha-D-muramoyl-L-alanyl-D-glutamate. 108-114 (GTNGKTT) provides a ligand contact to ATP. UDP-N-acetyl-alpha-D-muramoyl-L-alanyl-D-glutamate contacts are provided by residues asparagine 149, 150 to 151 (TT), serine 177, glutamine 183, and arginine 185. The residue at position 217 (lysine 217) is an N6-carboxylysine. Meso-2,6-diaminopimelate is bound by residues arginine 383, 407-410 (DNPR), glycine 459, and glutamate 463. A Meso-diaminopimelate recognition motif motif is present at residues 407–410 (DNPR).

This sequence belongs to the MurCDEF family. MurE subfamily. Mg(2+) serves as cofactor. In terms of processing, carboxylation is probably crucial for Mg(2+) binding and, consequently, for the gamma-phosphate positioning of ATP.

The protein resides in the cytoplasm. The enzyme catalyses UDP-N-acetyl-alpha-D-muramoyl-L-alanyl-D-glutamate + meso-2,6-diaminopimelate + ATP = UDP-N-acetyl-alpha-D-muramoyl-L-alanyl-gamma-D-glutamyl-meso-2,6-diaminopimelate + ADP + phosphate + H(+). The protein operates within cell wall biogenesis; peptidoglycan biosynthesis. Catalyzes the addition of meso-diaminopimelic acid to the nucleotide precursor UDP-N-acetylmuramoyl-L-alanyl-D-glutamate (UMAG) in the biosynthesis of bacterial cell-wall peptidoglycan. In Geobacillus thermodenitrificans (strain NG80-2), this protein is UDP-N-acetylmuramoyl-L-alanyl-D-glutamate--2,6-diaminopimelate ligase.